The chain runs to 312 residues: DNA-directed RNA polymerase subunit alpha (312 aa).

The tract at residues 1–229 (MLQYQIERID…ELFQPLATVT (229 aa)) is alpha N-terminal domain (alpha-NTD). Positions 240-312 (PSPEAQIPLE…ISIPQSRTSV (73 aa)) are alpha C-terminal domain (alpha-CTD).

The protein belongs to the RNA polymerase alpha chain family. In terms of assembly, in cyanobacteria the RNAP catalytic core is composed of 2 alpha, 1 beta, 1 beta', 1 gamma and 1 omega subunit. When a sigma factor is associated with the core the holoenzyme is formed, which can initiate transcription.

The enzyme catalyses RNA(n) + a ribonucleoside 5'-triphosphate = RNA(n+1) + diphosphate. Its function is as follows. DNA-dependent RNA polymerase catalyzes the transcription of DNA into RNA using the four ribonucleoside triphosphates as substrates. This Prochlorococcus marinus (strain MIT 9301) protein is DNA-directed RNA polymerase subunit alpha.